We begin with the raw amino-acid sequence, 272 residues long: MLLAIDVRNTHTVVGLLSGAKQHAKVVQQWRIRTESEVTADELALTIDGLIGEDSERLTGATGLSTVPSVLHEVRIMLEQYWPSVPHVLIEPGVRTGIPLLVDNPKEVGADRIVNCLAAYQQFAKAAIVVDFGSSICVDVVSAKGEFLGGAIAPGVQVSSDAAAARSAALRRVELARPRSVVGKNTVECMQAGAVFGFAGLVDGLVARIREDVKGFSADDDVAVVATGHTAPLLLPELHSVEHFDEHLTLNGLRLVFERNREAQRGRLKPAR.

6–13 (DVRNTHTV) lines the ATP pocket. 109–112 (GADR) contributes to the substrate binding site. The Proton acceptor role is filled by Asp-111. Asp-131 provides a ligand contact to K(+). Ser-134 serves as a coordination point for ATP. Thr-186 is a binding site for substrate.

Belongs to the type III pantothenate kinase family. In terms of assembly, homodimer. It depends on NH4(+) as a cofactor. The cofactor is K(+).

The protein localises to the cytoplasm. The enzyme catalyses (R)-pantothenate + ATP = (R)-4'-phosphopantothenate + ADP + H(+). The protein operates within cofactor biosynthesis; coenzyme A biosynthesis; CoA from (R)-pantothenate: step 1/5. In terms of biological role, catalyzes the phosphorylation of pantothenate (Pan), the first step in CoA biosynthesis. This is Type III pantothenate kinase from Mycobacterium ulcerans (strain Agy99).